Here is a 584-residue protein sequence, read N- to C-terminus: Phosphoinositide phospholipase C 7 (584 aa).

The region spanning 26–102 is the EF-hand-like domain; it reads EIKTLFDNYS…NSPLSSLEVH (77 aa). The PI-PLC X-box domain maps to 103-248; that stretch reads QDMDAPLSHY…LKKRIMISTK (146 aa). Catalysis depends on residues H118 and H164. The interval 285 to 318 is disordered; the sequence is DRSVDKNDSNGDDDDDDDDDDDDDDGDDKIKKNA. Position 287 is a phosphoserine (S287). The span at 294-311 shows a compositional bias: acidic residues; it reads NGDDDDDDDDDDDDDDGD. The 117-residue stretch at 323-439 folds into the PI-PLC Y-box domain; the sequence is KHLIAIEAGK…GYIKKPDLLL (117 aa). The region spanning 433 to 566 is the C2 domain; it reads KKPDLLLKSN…QGIRAVPLRN (134 aa).

The cofactor is Ca(2+). As to expression, expressed in leaves, roots, flowers and siliques.

The protein resides in the cell membrane. The catalysed reaction is a 1,2-diacyl-sn-glycero-3-phospho-(1D-myo-inositol-4,5-bisphosphate) + H2O = 1D-myo-inositol 1,4,5-trisphosphate + a 1,2-diacyl-sn-glycerol + H(+). In terms of biological role, the production of the second messenger molecules diacylglycerol (DAG) and inositol 1,4,5-trisphosphate (IP3) is mediated by activated phosphatidylinositol-specific phospholipase C enzymes. In Arabidopsis thaliana (Mouse-ear cress), this protein is Phosphoinositide phospholipase C 7 (PLC7).